Consider the following 496-residue polypeptide: Chaperone SurA (496 aa).

The N-terminal stretch at 1–42 is a signal peptide; sequence MACKSTAVRSATRVAPTRRLGMVTGALVALMAGAALLPAAHA. Residues 53–80 are disordered; that stretch reads RGIFTTPDASPSQPLLRGTLPGPSTASG. PpiC domains follow at residues 235-337 and 349-447; these read VQEY…KLVD and VAQT…QVEG.

Its subcellular location is the periplasm. The enzyme catalyses [protein]-peptidylproline (omega=180) = [protein]-peptidylproline (omega=0). Chaperone involved in the correct folding and assembly of outer membrane proteins. Recognizes specific patterns of aromatic residues and the orientation of their side chains, which are found more frequently in integral outer membrane proteins. May act in both early periplasmic and late outer membrane-associated steps of protein maturation. The protein is Chaperone SurA of Ralstonia nicotianae (strain ATCC BAA-1114 / GMI1000) (Ralstonia solanacearum).